A 473-amino-acid chain; its full sequence is Putative malate dehydrogenase 1B (473 aa).

The protein belongs to the LDH/MDH superfamily. MDH type 2 family.

This Bos taurus (Bovine) protein is Putative malate dehydrogenase 1B (MDH1B).